Consider the following 101-residue polypeptide: Protein Tat (101 aa).

Over residues 1-12 (MEPVDPRLEPWK) the composition is skewed to basic and acidic residues. The disordered stretch occupies residues 1–24 (MEPVDPRLEPWKHPGSQPKTASNN). The interval 1-24 (MEPVDPRLEPWKHPGSQPKTASNN) is interaction with human CREBBP. Residues 1–48 (MEPVDPRLEPWKHPGSQPKTASNNCYCKRCCLHCQVCFTKKGLGISYG) are transactivation. A cysteine-rich region spans residues 22–37 (SNNCYCKRCCLHCQVC). Zn(2+) contacts are provided by Cys-25 and Cys-27. Lys-28 carries the N6-acetyllysine; by host PCAF modification. Residues Cys-30, His-33, Cys-34, and Cys-37 each contribute to the Zn(2+) site. The tract at residues 38 to 48 (FTKKGLGISYG) is core. Residues 45–101 (ISYGRKKRRQRRRAPQDSKTHQVSLSKQPASQPRGDPTGPKESKKKVERETETDPED) form a disordered region. The span at 48-57 (GRKKRRQRRR) shows a compositional bias: basic residues. The Nuclear localization signal, RNA-binding (TAR), and protein transduction motif lies at 49–57 (RKKRRQRRR). The interaction with the host capping enzyme RNGTT stretch occupies residues 49–86 (RKKRRQRRRAPQDSKTHQVSLSKQPASQPRGDPTGPKE). Residues Lys-50 and Lys-51 each carry the N6-acetyllysine; by host EP300 and GCN5L2 modification. Asymmetric dimethylarginine; by host PRMT6 occurs at positions 52 and 53. The span at 65 to 75 (HQVSLSKQPAS) shows a compositional bias: polar residues. A Glycyl lysine isopeptide (Lys-Gly) (interchain with G-Cter in ubiquitin) cross-link involves residue Lys-71. A Cell attachment site motif is present at residues 78 to 80 (RGD). Over residues 83–101 (GPKESKKKVERETETDPED) the composition is skewed to basic and acidic residues.

The protein belongs to the lentiviruses Tat family. Interacts with host CCNT1. Associates with the P-TEFb complex composed at least of Tat, P-TEFb (CDK9 and CCNT1), TAR RNA, RNA Pol II. Recruits the HATs CREBBP, TAF1/TFIID, EP300, PCAF and GCN5L2. Interacts with host KAT5/Tip60; this interaction targets the latter to degradation. Interacts with the host deacetylase SIRT1. Interacts with host capping enzyme RNGTT; this interaction stimulates RNGTT. Binds to host KDR, and to the host integrins ITGAV/ITGB3 and ITGA5/ITGB1. Interacts with host KPNB1/importin beta-1 without previous binding to KPNA1/importin alpha-1. Interacts with EIF2AK2. Interacts with host nucleosome assembly protein NAP1L1; this interaction may be required for the transport of Tat within the nucleus, since the two proteins interact at the nuclear rim. Interacts with host C1QBP/SF2P32; this interaction involves lysine-acetylated Tat. Interacts with the host chemokine receptors CCR2, CCR3 and CXCR4. Interacts with host DPP4/CD26; this interaction may trigger an anti-proliferative effect. Interacts with host LDLR. Interacts with the host extracellular matrix metalloproteinase MMP1. Interacts with host PRMT6; this interaction mediates Tat's methylation. Interacts with, and is ubiquitinated by MDM2/Hdm2. Interacts with host PSMC3 and HTATIP2. Interacts with STAB1; this interaction may overcome SATB1-mediated repression of IL2 and IL2RA (interleukin) in T cells by binding to the same domain than HDAC1. Interacts (when acetylated) with human CDK13, thereby increasing HIV-1 mRNA splicing and promoting the production of the doubly spliced HIV-1 protein Nef. Interacts with host TBP; this interaction modulates the activity of transcriptional pre-initiation complex. Interacts with host RELA. Interacts with host PLSCR1; this interaction negatively regulates Tat transactivation activity by altering its subcellular distribution. In terms of processing, asymmetrical arginine methylation by host PRMT6 seems to diminish the transactivation capacity of Tat and affects the interaction with host CCNT1. Acetylation by EP300, CREBBP, GCN5L2/GCN5 and PCAF regulates the transactivation activity of Tat. EP300-mediated acetylation of Lys-50 promotes dissociation of Tat from the TAR RNA through the competitive binding to PCAF's bromodomain. In addition, the non-acetylated Tat's N-terminus can also interact with PCAF. PCAF-mediated acetylation of Lys-28 enhances Tat's binding to CCNT1. Lys-50 is deacetylated by SIRT1. Post-translationally, polyubiquitination by host MDM2 does not target Tat to degradation, but activates its transactivation function and fosters interaction with CCNT1 and TAR RNA. In terms of processing, phosphorylated by EIF2AK2 on serine and threonine residues adjacent to the basic region important for TAR RNA binding and function. Phosphorylation of Tat by EIF2AK2 is dependent on the prior activation of EIF2AK2 by dsRNA.

It localises to the host nucleus. The protein resides in the host nucleolus. It is found in the host cytoplasm. Its subcellular location is the secreted. In terms of biological role, transcriptional activator that increases RNA Pol II processivity, thereby increasing the level of full-length viral transcripts. Recognizes a hairpin structure at the 5'-LTR of the nascent viral mRNAs referred to as the transactivation responsive RNA element (TAR) and recruits the cyclin T1-CDK9 complex (P-TEFb complex) that will in turn hyperphosphorylate the RNA polymerase II to allow efficient elongation. The CDK9 component of P-TEFb and other Tat-activated kinases hyperphosphorylate the C-terminus of RNA Pol II that becomes stabilized and much more processive. Other factors such as HTATSF1/Tat-SF1, SUPT5H/SPT5, and HTATIP2 are also important for Tat's function. Besides its effect on RNA Pol II processivity, Tat induces chromatin remodeling of proviral genes by recruiting the histone acetyltransferases (HATs) CREBBP, EP300 and PCAF to the chromatin. This also contributes to the increase in proviral transcription rate, especially when the provirus integrates in transcriptionally silent region of the host genome. To ensure maximal activation of the LTR, Tat mediates nuclear translocation of NF-kappa-B by interacting with host RELA. Through its interaction with host TBP, Tat may also modulate transcription initiation. Tat can reactivate a latently infected cell by penetrating in it and transactivating its LTR promoter. In the cytoplasm, Tat is thought to act as a translational activator of HIV-1 mRNAs. Functionally, extracellular circulating Tat can be endocytosed by surrounding uninfected cells via the binding to several surface receptors such as CD26, CXCR4, heparan sulfate proteoglycans (HSPG) or LDLR. Neurons are rarely infected, but they internalize Tat via their LDLR. Through its interaction with nuclear HATs, Tat is potentially able to control the acetylation-dependent cellular gene expression. Modulates the expression of many cellular genes involved in cell survival, proliferation or in coding for cytokines or cytokine receptors. Tat plays a role in T-cell and neurons apoptosis. Tat induced neurotoxicity and apoptosis probably contribute to neuroAIDS. Circulating Tat also acts as a chemokine-like and/or growth factor-like molecule that binds to specific receptors on the surface of the cells, affecting many cellular pathways. In the vascular system, Tat binds to ITGAV/ITGB3 and ITGA5/ITGB1 integrins dimers at the surface of endothelial cells and competes with bFGF for heparin-binding sites, leading to an excess of soluble bFGF. The sequence is that of Protein Tat from Homo sapiens (Human).